The sequence spans 323 residues: Cyclin-H (323 aa).

The segment at 296-323 (GYEDDGYISKKPKTEEDEWTDEDFGDSL) is disordered. Acidic residues predominate over residues 310–323 (EEDEWTDEDFGDSL).

This sequence belongs to the cyclin family. Cyclin C subfamily. In terms of assembly, associates primarily with CDK7 and MAT1 to form the CAK complex. CAK can further associate with the core-TFIIH to form the TFIIH basal transcription factor.

Its subcellular location is the nucleus. In terms of biological role, regulates CDK7, the catalytic subunit of the CDK-activating kinase (CAK) enzymatic complex. CAK activates the cyclin-associated kinases CDK1, CDK2, CDK4 and CDK6 by threonine phosphorylation. CAK complexed to the core-TFIIH basal transcription factor activates RNA polymerase II by serine phosphorylation of the repetitive C-terminal domain (CTD) of its large subunit (POLR2A), allowing its escape from the promoter and elongation of the transcripts. Involved in cell cycle control and in RNA transcription by RNA polymerase II. Its expression and activity are constant throughout the cell cycle. The chain is Cyclin-H (ccnh) from Xenopus laevis (African clawed frog).